We begin with the raw amino-acid sequence, 284 residues long: NAD kinase (284 aa).

D60 functions as the Proton acceptor in the catalytic mechanism. Residues 60-61 (DG), 134-135 (NE), R145, K162, D164, 175-180 (TAYSFS), and Q234 each bind NAD(+).

It belongs to the NAD kinase family. A divalent metal cation serves as cofactor.

The protein localises to the cytoplasm. It carries out the reaction NAD(+) + ATP = ADP + NADP(+) + H(+). Involved in the regulation of the intracellular balance of NAD and NADP, and is a key enzyme in the biosynthesis of NADP. Catalyzes specifically the phosphorylation on 2'-hydroxyl of the adenosine moiety of NAD to yield NADP. This chain is NAD kinase, found in Clostridium botulinum (strain Eklund 17B / Type B).